Consider the following 332-residue polypeptide: 2,3-diketo-L-gulonate reductase (332 aa).

Catalysis depends on H44, which acts as the Proton donor. Residues 168–174, 224–225, and 304–306 each bind NAD(+); these read ITMVDMS, WK, and GHE.

This sequence belongs to the LDH2/MDH2 oxidoreductase family. DlgD subfamily. Homodimer.

The protein resides in the cytoplasm. It catalyses the reaction 3-dehydro-L-gulonate + NAD(+) = 2,3-dioxo-L-gulonate + NADH + H(+). The catalysed reaction is 3-dehydro-L-gulonate + NADP(+) = 2,3-dioxo-L-gulonate + NADPH + H(+). Functionally, catalyzes the reduction of 2,3-diketo-L-gulonate in the presence of NADH, to form 3-keto-L-gulonate. The chain is 2,3-diketo-L-gulonate reductase from Salmonella typhi.